A 29-amino-acid polypeptide reads, in one-letter code: Kalata-B11 (29 aa).

Positions G1 to D29 form a cross-link, cyclopeptide (Gly-Asp). Disulfide bonds link C5/C19, C9/C21, and C14/C26.

Post-translationally, this is a cyclic peptide.

Its function is as follows. Probably participates in a plant defense mechanism. This Oldenlandia affinis protein is Kalata-B11.